The following is a 747-amino-acid chain: Protein neuralized (747 aa).

The 155-residue stretch at 97–251 (PLQFHTVHGD…NCTGIEFLDA (155 aa)) folds into the NHR 1 domain. Residues 280 to 292 (LPQQQQQLPQQQL) are compositionally biased toward low complexity. Positions 280–309 (LPQQQQQLPQQQLTAHHPLQQSRRSLPGGT) are disordered. Positions 359–514 (PVPFHITKGR…STQSLRMFRQ (156 aa)) constitute an NHR 2 domain. The segment at 694–735 (CTICYENPIDSVLYMCGHMCMCYDCAIEQWRGVGGGQCPLCR) adopts an RING-type zinc-finger fold.

It localises to the nucleus. Functionally, involved in neurogenesis. Interacts with other neurogenic proteins in the specification of the neuroblast versus epidermoblast cell fate. The chain is Protein neuralized (neur) from Drosophila virilis (Fruit fly).